Here is a 282-residue protein sequence, read N- to C-terminus: Bis(5'-nucleosyl)-tetraphosphatase, symmetrical (282 aa).

This sequence belongs to the Ap4A hydrolase family.

It carries out the reaction P(1),P(4)-bis(5'-adenosyl) tetraphosphate + H2O = 2 ADP + 2 H(+). Its function is as follows. Hydrolyzes diadenosine 5',5'''-P1,P4-tetraphosphate to yield ADP. The protein is Bis(5'-nucleosyl)-tetraphosphatase, symmetrical of Burkholderia mallei (strain NCTC 10247).